We begin with the raw amino-acid sequence, 192 residues long: uncharacterized protein (192 aa).

Positions 1–24 are cleaved as a signal peptide; the sequence is MSGVLSCVLRACACAGLCCWVCMG. The segment at 140–192 is disordered; sequence RAGADEGAGGNAAGCPEDTRGFARSPGDLMGGMNGDLGDEGETGEGGDNGAGE.

This is an uncharacterized protein from Human herpesvirus 6A (strain Uganda-1102) (HHV-6 variant A).